Consider the following 266-residue polypeptide: Metallo-beta-lactamase VIM-2 (266 aa).

Residues 1-20 form the signal peptide; that stretch reads MFKLLSKLLVYLTASIMAIA. Zn(2+)-binding residues include H114, H116, and C198.

This sequence belongs to the metallo-beta-lactamase superfamily. Class-B beta-lactamase family. As to quaternary structure, monomer. Zn(2+) is required as a cofactor.

The protein resides in the periplasm. The enzyme catalyses a beta-lactam + H2O = a substituted beta-amino acid. Inhibited by chelating agents such as EDTA. Inhibited by a fungal natural product, aspergillomarasmine A (AMA). Inhibited by 2-triazolylthioacetamides. Functionally, class B beta-lactamase which confers resistance to the beta-lactam antibiotics, including penicillins, cephalosporins and carbapenems. Acts via hydrolysis of the beta-lactam ring. Has penicillin-, cephalosporin- and carbapenem-hydrolyzing activities. This is Metallo-beta-lactamase VIM-2 from Escherichia coli.